The primary structure comprises 171 residues: Transcription factor E (171 aa).

The HTH TFE/IIEalpha-type domain maps to 1–81 (MLNLAKELVG…YWKVNVNQIN (81 aa)).

This sequence belongs to the TFE family. Monomer. Interaction with RNA polymerase subunits RpoF and RpoE is necessary for Tfe stimulatory transcription activity. Able to interact with Tbp and RNA polymerase in the absence of DNA promoter. Interacts both with the preinitiation and elongation complexes.

In terms of biological role, transcription factor that plays a role in the activation of archaeal genes transcribed by RNA polymerase. Facilitates transcription initiation by enhancing TATA-box recognition by TATA-box-binding protein (Tbp), and transcription factor B (Tfb) and RNA polymerase recruitment. Not absolutely required for transcription in vitro, but particularly important in cases where Tbp or Tfb function is not optimal. It dynamically alters the nucleic acid-binding properties of RNA polymerases by stabilizing the initiation complex and destabilizing elongation complexes. Seems to translocate with the RNA polymerase following initiation and acts by binding to the non template strand of the transcription bubble in elongation complexes. The polypeptide is Transcription factor E (Sulfolobus acidocaldarius (strain ATCC 33909 / DSM 639 / JCM 8929 / NBRC 15157 / NCIMB 11770)).